The following is a 355-amino-acid chain: Ubiquinone biosynthesis protein COQ4 homolog, mitochondrial (355 aa).

His134, Asp135, His138, and Glu150 together coordinate Zn(2+).

It belongs to the COQ4 family. As to quaternary structure, component of a multi-subunit COQ enzyme complex. Requires Zn(2+) as cofactor.

Its subcellular location is the mitochondrion inner membrane. It catalyses the reaction a 4-hydroxy-3-methoxy-5-(all-trans-polyprenyl)benzoate + H(+) = a 2-methoxy-6-(all-trans-polyprenyl)phenol + CO2. Its pathway is cofactor biosynthesis; ubiquinone biosynthesis. Functionally, lyase that catalyzes the C1-decarboxylation of 4-hydroxy-3-methoxy-5-(all-trans-polyprenyl)benzoic acid into 2-methoxy-6-(all-trans-polyprenyl)phenol during ubiquinone biosynthesis. In Plasmodium yoelii yoelii, this protein is Ubiquinone biosynthesis protein COQ4 homolog, mitochondrial.